Here is a 350-residue protein sequence, read N- to C-terminus: MTLQRVSPDGILDLTIIGGGPTGIFAAFQCGMNNISCRIIESMPQLGGQLSALYPEKHIYDVAGFPEVPAAGLVDSLWKQTERYGPEVILGETVISYRKLENGDFQVVTASGRTFVSRALLLAAGLGAFSPRKLPQLGNISPLEDRSVFYAVKNRADFRDKNVVIVGGGDSALDWTVGLMGVARKVTLVHRMHEFQGHGKTAREVDEAKESGAIDVHLSTEVSAIDLNGDTLQAVHLKRRDGITSRVEADRLLLLIGFKSNLGPLADWGLELVDNAVEVDGHMKTSVDGLYAAGDIASYPGKLKIIQTGLSDAAMAVRHSLTYIKPGEKIRHTFSSVKMAKEKKSEGQNA.

8 residues coordinate FAD: T22, E41, Q49, Y54, V94, F129, D295, and S336.

Belongs to the ferredoxin--NADP reductase type 2 family. In terms of assembly, homodimer. The cofactor is FAD.

It catalyses the reaction 2 reduced [2Fe-2S]-[ferredoxin] + NADP(+) + H(+) = 2 oxidized [2Fe-2S]-[ferredoxin] + NADPH. The polypeptide is Ferredoxin--NADP reductase (Chlorobium luteolum (strain DSM 273 / BCRC 81028 / 2530) (Pelodictyon luteolum)).